The following is a 619-amino-acid chain: Chaperone protein HscA homolog (619 aa).

The protein belongs to the heat shock protein 70 family.

Its function is as follows. Chaperone involved in the maturation of iron-sulfur cluster-containing proteins. Has a low intrinsic ATPase activity which is markedly stimulated by HscB. The sequence is that of Chaperone protein HscA homolog from Acinetobacter baumannii (strain AB0057).